Consider the following 218-residue polypeptide: Large ribosomal subunit protein uL3 (218 aa).

The interval His126–Arg170 is disordered.

The protein belongs to the universal ribosomal protein uL3 family. As to quaternary structure, part of the 50S ribosomal subunit. Forms a cluster with proteins L14 and L19.

One of the primary rRNA binding proteins, it binds directly near the 3'-end of the 23S rRNA, where it nucleates assembly of the 50S subunit. The polypeptide is Large ribosomal subunit protein uL3 (Prochlorococcus marinus (strain MIT 9313)).